Consider the following 114-residue polypeptide: Small ribosomal subunit protein eS25 (114 aa).

Residues 1–33 form a disordered region; it reads MAPKKDKAPPPSSKPAKSGGKQKKKKWSKGKQK. Residues 20–30 show a composition bias toward basic residues; sequence GKQKKKKWSKG.

This sequence belongs to the eukaryotic ribosomal protein eS25 family.

The chain is Small ribosomal subunit protein eS25 (RPS25) from Amaranthus cruentus (Purple amaranth).